A 267-amino-acid polypeptide reads, in one-letter code: NAD kinase (267 aa).

Aspartate 45 (proton acceptor) is an active-site residue. NAD(+) is bound by residues 45–46 (DG), 123–124 (NE), arginine 149, aspartate 151, alanine 186, and asparagine 226.

It belongs to the NAD kinase family. A divalent metal cation serves as cofactor.

It localises to the cytoplasm. The catalysed reaction is NAD(+) + ATP = ADP + NADP(+) + H(+). Its function is as follows. Involved in the regulation of the intracellular balance of NAD and NADP, and is a key enzyme in the biosynthesis of NADP. Catalyzes specifically the phosphorylation on 2'-hydroxyl of the adenosine moiety of NAD to yield NADP. The sequence is that of NAD kinase from Shouchella clausii (strain KSM-K16) (Alkalihalobacillus clausii).